The primary structure comprises 313 residues: MTQWYPASPALWQGRDDSIEAPDARRLFQTVTRSETFSPENWQQKIALMGFACDEGVKRNAGRPGAAGAPDALRKALANMASHQGHERLVDLGNWVAPTPDLEGAQQALRDAVSRCLRAGMRTLVLGGGHETAFGHGAGVLDAFAQESVGIINLDAHLDLRQTDRATSGTPFRQLAQLCDAQSRAFHYACFGVSRAANTQALWREAQWRNVTVVEDLDCHDALAQMAQFIDKVDKIYLTIDLDVLPVWEMPAVSAPAALGVPLIQVLRLIEPVCRSGKLQAADLVEFNPRFDDDGAAARVAARLGWQIAHWWR.

Residues H130, D155, H157, D159, D241, and D243 each coordinate Mn(2+).

The protein belongs to the arginase family. Requires Mn(2+) as cofactor.

It carries out the reaction N-formimidoyl-L-glutamate + H2O = formamide + L-glutamate. It participates in amino-acid degradation; L-histidine degradation into L-glutamate; L-glutamate from N-formimidoyl-L-glutamate (hydrolase route): step 1/1. Functionally, catalyzes the conversion of N-formimidoyl-L-glutamate to L-glutamate and formamide. The protein is Formimidoylglutamase of Salmonella agona (strain SL483).